We begin with the raw amino-acid sequence, 66 residues long: Beta-toxin Cb2 (66 aa).

One can recognise an LCN-type CS-alpha/beta domain in the interval 1 to 66; it reads KEGYLVDLHT…VWPLPNKRCK (66 aa). Cystine bridges form between cysteine 12–cysteine 65, cysteine 16–cysteine 41, cysteine 25–cysteine 46, and cysteine 29–cysteine 48.

Belongs to the long (4 C-C) scorpion toxin superfamily. Sodium channel inhibitor family. Beta subfamily. Expressed by the venom gland.

Its subcellular location is the secreted. In terms of biological role, beta toxins bind voltage-independently at site-4 of sodium channels (Nav) and reduces peak current and shifts the voltage of activation toward more negative potentials thereby affecting sodium channel activation and promoting spontaneous and repetitive firing. Has an inhibitory effect on voltage-gated sodium channel hNav1.6/SCN8A, affecting both the activation and inactivation processes. Also reduces the peak current of hNav1.5/SCN5A but does not shift its voltage of activation. This toxin is active against mammals and lethal to mice. The protein is Beta-toxin Cb2 of Centruroides baergi (Scorpion).